The sequence spans 495 residues: Transmembrane protein 161A (495 aa).

Residues 1 to 28 (MALMGVQLVVSLLAVSIMQRMAPHLSFA) form the signal peptide. The Extracellular segment spans residues 29 to 99 (RWLLCNGSLL…VNVMDALVLR (71 aa)). A glycan (N-linked (GlcNAc...) asparagine) is linked at Asn34. A helical membrane pass occupies residues 100–120 (FFVEYQWLIDFAVYATGIYLF). Residues 121–135 (TEGYYSVVDASKEVN) are Cytoplasmic-facing. A helical membrane pass occupies residues 136-156 (IASIWCVLTVLFCLRTLYLLM). Over 157 to 167 (SHYFLSEEGGE) the chain is Extracellular. A helical membrane pass occupies residues 168 to 188 (RSVCLAFGFLSLLIAMLVLVV). Over 189-227 (REDYLEFGLEPGFTSLFDNFEVFARKQGYEWSVPFTKLS) the chain is Cytoplasmic. Residues 228 to 248 (VKLGLAVICAFIGALLAFPGL) form a helical membrane-spanning segment. Over 249-265 (RLAQTHLDAVQMNADRP) the chain is Extracellular. The helical transmembrane segment at 266 to 286 (MIQILLHMSFLSPLVIIVMWI) threads the bilayer. The Cytoplasmic portion of the chain corresponds to 287–305 (KPIARDFLGNAPMGKTSVT). A helical transmembrane segment spans residues 306 to 326 (LLSSSAFSSVRLWTIVVLCVL). At 327 to 367 (RLLLTRYHLQAYLNLAQKWVEQMKKEAGRIAAIDIQRKVTR) the chain is on the extracellular side. A helical transmembrane segment spans residues 368-388 (IFCYLTVVTLQYLIPILLVLF). Topologically, residues 389–465 (STLALKSLGD…ALLTPIFFRG (77 aa)) are cytoplasmic. A helical membrane pass occupies residues 466 to 486 (IFAFLTWWVAACQLISSLFGI). Residues 487–495 (YFHQYLMHN) are Extracellular-facing.

The protein belongs to the TMEM161 family.

It is found in the membrane. In terms of biological role, may play a role in protection against oxidative stress. This Danio rerio (Zebrafish) protein is Transmembrane protein 161A (tmem161a).